The following is a 121-amino-acid chain: Flagellar protein FliT (121 aa).

The segment at 1 to 50 is required for homodimerization; the sequence is MNHAPHLYFAWQQLVEKSQLMLRLATEEQWDELIASEMAYVNAVQEIAHL. The segment at 60-98 is fliD binding; that stretch reads MQEQLRPMLRLILDNESKVKQLLQIRMDELAKLVGQSSV.

Belongs to the FliT family. As to quaternary structure, homodimer. Interacts with FliD and FlhC.

It is found in the cytoplasm. Its subcellular location is the cytosol. Its function is as follows. Dual-function protein that regulates the transcription of class 2 flagellar operons and that also acts as an export chaperone for the filament-capping protein FliD. As a transcriptional regulator, acts as an anti-FlhDC factor; it directly binds FlhC, thus inhibiting the binding of the FlhC/FlhD complex to class 2 promoters, resulting in decreased expression of class 2 flagellar operons. As a chaperone, effects FliD transition to the membrane by preventing its premature polymerization, and by directing it to the export apparatus. This is Flagellar protein FliT from Escherichia coli O157:H7.